We begin with the raw amino-acid sequence, 1111 residues long: Protein NETWORKED 1C (1111 aa).

Positions 13–93 (YSWWWDSHNT…ERYNHATGVI (81 aa)) constitute an NAB domain. 3 coiled-coil regions span residues 202-287 (SESE…KESS), 314-605 (ERAS…LISE), and 642-752 (KTIG…LESK). Positions 850-870 (TGGGRSMRKQDGGSGRMRKQS) are disordered. Residues 943–1009 (NREVNKRRVL…EGEEAIEKLF (67 aa)) adopt a coiled-coil conformation.

It belongs to the NET family.

Its function is as follows. Plant-specific actin binding protein. May be part of a membrane-cytoskeletal adapter complex. This Arabidopsis thaliana (Mouse-ear cress) protein is Protein NETWORKED 1C.